Here is a 168-residue protein sequence, read N- to C-terminus: NADH-quinone oxidoreductase subunit B (168 aa).

[4Fe-4S] cluster is bound by residues C49, C50, C114, and C144.

This sequence belongs to the complex I 20 kDa subunit family. NDH-1 is composed of 14 different subunits. Subunits NuoB, C, D, E, F, and G constitute the peripheral sector of the complex. It depends on [4Fe-4S] cluster as a cofactor.

It localises to the cell membrane. It catalyses the reaction a quinone + NADH + 5 H(+)(in) = a quinol + NAD(+) + 4 H(+)(out). Its function is as follows. NDH-1 shuttles electrons from NADH, via FMN and iron-sulfur (Fe-S) centers, to quinones in the respiratory chain. Couples the redox reaction to proton translocation (for every two electrons transferred, four hydrogen ions are translocated across the cytoplasmic membrane), and thus conserves the redox energy in a proton gradient. The sequence is that of NADH-quinone oxidoreductase subunit B from Wolbachia pipientis wMel.